Reading from the N-terminus, the 282-residue chain is Pantothenate synthetase (282 aa).

26–33 contributes to the ATP binding site; sequence MGNLHEGH. H33 (proton donor) is an active-site residue. A (R)-pantoate-binding site is contributed by Q57. Residue Q57 participates in beta-alanine binding. 144–147 lines the ATP pocket; that stretch reads GKKD. Q150 contacts (R)-pantoate. ATP-binding positions include I173 and 181–184; that span reads LSSR.

The protein belongs to the pantothenate synthetase family. In terms of assembly, homodimer.

The protein resides in the cytoplasm. It catalyses the reaction (R)-pantoate + beta-alanine + ATP = (R)-pantothenate + AMP + diphosphate + H(+). Its pathway is cofactor biosynthesis; (R)-pantothenate biosynthesis; (R)-pantothenate from (R)-pantoate and beta-alanine: step 1/1. Its function is as follows. Catalyzes the condensation of pantoate with beta-alanine in an ATP-dependent reaction via a pantoyl-adenylate intermediate. The polypeptide is Pantothenate synthetase (Cupriavidus necator (strain ATCC 17699 / DSM 428 / KCTC 22496 / NCIMB 10442 / H16 / Stanier 337) (Ralstonia eutropha)).